The chain runs to 139 residues: uncharacterized protein (139 aa).

The region spanning 8 to 63 is the HTH cro/C1-type domain; the sequence is LRELRRARKLTVNQLAVYSGISSATISKIENGKRGTPKPATIKKLAAVLKVPYENL. A DNA-binding region (H-T-H motif) is located at residues 19–38; the sequence is VNQLAVYSGISSATISKIEN.

This is an uncharacterized protein from Bacillus subtilis (strain 168).